The sequence spans 195 residues: MNLSATLILAFGMSMDAFAASVGKGATLHKPALREALRTGLIFGVIEAITPLIGWGLGLLSSQYIMRWDHWVAFTLLAFLGGRMVLAGWKQQPLETSLVGKHSLGVLIATAIATSLDALAIGVGLAMLQVNILHAALLIGLATLIMSTIGMLLGRFVGPCLGSKAEIIGGLILIGIGCNILYSHIGEAMLAHLPG.

The next 6 helical transmembrane spans lie at 3-23 (LSAT…ASVG), 40-60 (GLIF…LGLL), 68-88 (WDHW…VLAG), 106-126 (VLIA…VGLA), 132-152 (ILHA…IGML), and 165-185 (AEII…YSHI).

This sequence belongs to the MntP (TC 9.B.29) family.

It is found in the cell inner membrane. Probably functions as a manganese efflux pump. The polypeptide is Putative manganese efflux pump MntP (Sodalis glossinidius (strain morsitans)).